Reading from the N-terminus, the 240-residue chain is Biosynthetic peptidoglycan transglycosylase (240 aa).

The chain crosses the membrane as a helical span at residues 15 to 35 (WMFYLGAVVAIAWLATQAFYF).

The protein belongs to the glycosyltransferase 51 family.

The protein resides in the cell inner membrane. The catalysed reaction is [GlcNAc-(1-&gt;4)-Mur2Ac(oyl-L-Ala-gamma-D-Glu-L-Lys-D-Ala-D-Ala)](n)-di-trans,octa-cis-undecaprenyl diphosphate + beta-D-GlcNAc-(1-&gt;4)-Mur2Ac(oyl-L-Ala-gamma-D-Glu-L-Lys-D-Ala-D-Ala)-di-trans,octa-cis-undecaprenyl diphosphate = [GlcNAc-(1-&gt;4)-Mur2Ac(oyl-L-Ala-gamma-D-Glu-L-Lys-D-Ala-D-Ala)](n+1)-di-trans,octa-cis-undecaprenyl diphosphate + di-trans,octa-cis-undecaprenyl diphosphate + H(+). It functions in the pathway cell wall biogenesis; peptidoglycan biosynthesis. Peptidoglycan polymerase that catalyzes glycan chain elongation from lipid-linked precursors. The polypeptide is Biosynthetic peptidoglycan transglycosylase (Paraburkholderia xenovorans (strain LB400)).